Reading from the N-terminus, the 135-residue chain is Protein NrdI (135 aa).

Belongs to the NrdI family.

Probably involved in ribonucleotide reductase function. This chain is Protein NrdI, found in Pectobacterium atrosepticum (strain SCRI 1043 / ATCC BAA-672) (Erwinia carotovora subsp. atroseptica).